Reading from the N-terminus, the 529-residue chain is MEQEKKLLVSDSNSFMERESLKSPFTGDTSMNNLETVHHNNSKADKLKEKPSEWSKRHRPQHYKHEDAKEMPLTWVQDEIWCHDSYESDGKSENWGNFIAKEEEKPNHQEWDSGEHTNACVQQNSSFVDRPYKCSECWKSFSNSSHLRTHQRTHSGEKPYKCSECAKCFCNSSHLIQHLRMHTGEKPYQCGECGKSFSNTSHLIIHERTHTGEKPYKCPECGKRFSSSSHLIQHHRSHTGEKPYECSVCGKGFSHSYVLIEHQRTHTGEKPYKCPDCGKSFSQSSSLIRHQRTHTGEKPYKCLECEKSFGCNSTLIKHQRIHTGEKPYQCPECGKNFSRSSNLITHQKMHTGEKSYESSEYEESLGQNCNVIEECRIQLGEKPYRCCECGKSFGLSSHLIRHQRTHTGEKPYRCSECWKTFSQSSTLVIHQRTHTGEKPYKCPDCGESFSQSFNLIRHRRTHIGEKPYKCTSCEKCFSRSAYLSQHRKIHVEKPFESPDVGDFPHEWTWKNCSGEMPFISSFSVSNSSS.

A disordered region spans residues 1-62 (MEQEKKLLVS…EWSKRHRPQH (62 aa)). Glycyl lysine isopeptide (Lys-Gly) (interchain with G-Cter in SUMO2) cross-links involve residues Lys5 and Lys6. Residues 26–35 (TGDTSMNNLE) are compositionally biased toward polar residues. Residues 36–55 (TVHHNNSKADKLKEKPSEWS) show a composition bias toward basic and acidic residues. 12 C2H2-type zinc fingers span residues 132-154 (YKCS…QRTH), 160-182 (YKCS…LRMH), 188-210 (YQCG…ERTH), 216-238 (YKCP…HRSH), 244-266 (YECS…QRTH), 272-294 (YKCP…QRTH), 300-322 (YKCL…QRIH), 328-350 (YQCP…QKMH), 384-406 (YRCC…QRTH), 412-434 (YRCS…QRTH), 440-462 (YKCP…RRTH), and 468-490 (YKCT…RKIH).

It belongs to the krueppel C2H2-type zinc-finger protein family.

The protein localises to the nucleus. Functionally, may be involved in transcriptional regulation. The polypeptide is Zinc finger protein 572 (ZNF572) (Homo sapiens (Human)).